The following is a 352-amino-acid chain: Nuclear receptor subfamily 1 group I member 3 (352 aa).

Positions 8 to 83 form a DNA-binding region, nuclear receptor; it reads LRNCVVCGDQ…AGMRKDMILS (76 aa). An NR C4-type zinc finger spans residues 11 to 31; the sequence is CVVCGDQATGYHFNALTCEGC. Residue Thr-38 is modified to Phosphothreonine; by PKC. An NR C4-type zinc finger spans residues 47–71; that stretch reads CPFAGSCEVSKTQRRHCPACRLQKC. Residues 109 to 352 form the NR LBD domain; the sequence is EQEELIRTLL…MMPLLQEICS (244 aa).

The protein belongs to the nuclear hormone receptor family. NR1 subfamily. In terms of assembly, interacts with ECT2. Heterodimer of NR1I3 and RXR. Interacts with PSMC4. Directly interacts with DNAJC7. The DNAJC7-NR1I3 complex may also include HSP90. Interacts with CRY1. Interacts with CRY2 in a ligand-dependent manner. Phosphorylated at Thr-38 by PKC, dephosphorylation of Thr-38 is required for nuclear translocation and activation. As to expression, predominantly expressed in liver.

The protein localises to the nucleus. Its subcellular location is the cytoplasm. It is found in the cytoskeleton. Binds and transactivates the retinoic acid response elements that control expression of the retinoic acid receptor beta 2 and alcohol dehydrogenase 3 genes. Transactivates both the phenobarbital responsive element module of the human CYP2B6 gene and the CYP3A4 xenobiotic response element. This Homo sapiens (Human) protein is Nuclear receptor subfamily 1 group I member 3 (NR1I3).